The sequence spans 158 residues: Large ribosomal subunit protein uL11 (158 aa).

Belongs to the universal ribosomal protein uL11 family. In terms of assembly, part of the ribosomal stalk of the 50S ribosomal subunit. Interacts with L10 and the large rRNA to form the base of the stalk. L10 forms an elongated spine to which L12 dimers bind in a sequential fashion forming a multimeric L10(L12)X complex.

Its function is as follows. Forms part of the ribosomal stalk which helps the ribosome interact with GTP-bound translation factors. The polypeptide is Large ribosomal subunit protein uL11 (Methanosphaerula palustris (strain ATCC BAA-1556 / DSM 19958 / E1-9c)).